The primary structure comprises 206 residues: Ras-related protein RABG3c (206 aa).

15-22 contacts GTP; sequence GDSGVGKT. The short motif at 37–45 is the Effector region element; the sequence is YKATIGADF. GTP-binding positions include 63–67, 125–128, and 158–159; these read DTAGQ, NKTD, and SA. 2 S-geranylgeranyl cysteine lipidation sites follow: cysteine 204 and cysteine 206. Cysteine 206 bears the Cysteine methyl ester mark.

It belongs to the small GTPase superfamily. Rab family.

It is found in the cell membrane. Functionally, intracellular vesicle trafficking and protein transport. This Arabidopsis thaliana (Mouse-ear cress) protein is Ras-related protein RABG3c (RABG3C).